Here is a 147-residue protein sequence, read N- to C-terminus: Fluoride-specific ion channel FluC 1 (147 aa).

The next 4 helical transmembrane spans lie at 29–49 (YVYIFIGGALGALLRYLISFL), 61–81 (IANLTGAFVMGLLTALTIAFF), 90–110 (AITTGFLGALTTFSTFQLELI), and 118–138 (FITLLLYAVTSYVFGILLCYV). Residues Gly97 and Thr100 each coordinate Na(+).

The protein belongs to the fluoride channel Fluc/FEX (TC 1.A.43) family.

The protein localises to the cell membrane. It carries out the reaction fluoride(in) = fluoride(out). Na(+) is not transported, but it plays an essential structural role and its presence is essential for fluoride channel function. In terms of biological role, fluoride-specific ion channel. Important for reducing fluoride concentration in the cell, thus reducing its toxicity. The protein is Fluoride-specific ion channel FluC 1 of Staphylococcus aureus (strain MRSA252).